The chain runs to 613 residues: Activating transcription factor 3 (613 aa).

Disordered stretches follow at residues 77 to 115 (RHFNGHPNGQSHSQDSSHSSCSGSPLDSPAGTATTPSVQ) and 133 to 218 (KRKL…NKIA). The span at 85 to 105 (GQSHSQDSSHSSCSGSPLDSP) shows a compositional bias: low complexity. The span at 138 to 147 (TCDSSSGSEQ) shows a compositional bias: polar residues. Residues 158–175 (NHNGHSGSSNNYSGSMSN) are compositionally biased toward low complexity. Residues 178–191 (DLDDDCEESSDDDS) are compositionally biased toward acidic residues. In terms of domain architecture, bZIP spans 205–268 (EDRRRRRRER…QKLVDMLKSH (64 aa)). The basic motif stretch occupies residues 207–229 (RRRRRRERNKIAATKCRMKKRER). A leucine-zipper region spans residues 233–261 (LIKESEVLDTQNVELKNQVRQLETERQKL). The disordered stretch occupies residues 337 to 446 (PNGYCKPSPS…SSNATSSTTP (110 aa)). The span at 356 to 368 (QQQQQQQQQQQPQ) shows a compositional bias: low complexity. Positions 369 to 389 (SLNPAGNNVIDQQHANPSPSL) are enriched in polar residues. Low complexity predominate over residues 402 to 446 (GSASNHPSHNNNNNNNNSSGASSNTSNNNSNISSHSSNATSSTTP).

The protein belongs to the bZIP family. ATF subfamily. As to quaternary structure, interacts with Jra/jun; the interaction enhances the DNA-binding activity of Atf3. Moderate expression in some regions of the larval nervous system, the ring gland and imaginal disks. High expression in larval gut, excretory malpighian tubules, salivary glands, and, to a lesser extent, the fat body where levels are approximately 2.5-fold less than the gut.

Its subcellular location is the nucleus. In terms of biological role, transcription factor which binds to the cAMP response element (CRE). Regulates metabolic and innate immune homeostasis, possibly by controlling appropriate expression of genes involved in peritrophic matrix composition and ensuring the normal digestive and immune function of the gut. Required for the expression of odorant receptors Or43b and Or47b. This is Activating transcription factor 3 from Drosophila melanogaster (Fruit fly).